Consider the following 495-residue polypeptide: Cobyric acid synthase (495 aa).

A GATase cobBQ-type domain is found at 256 to 444 (KVNVAVVLLR…VHGILDNPSV (189 aa)). Catalysis depends on Cys337, which acts as the Nucleophile. Residue His436 is part of the active site.

The protein belongs to the CobB/CobQ family. CobQ subfamily.

It functions in the pathway cofactor biosynthesis; adenosylcobalamin biosynthesis. In terms of biological role, catalyzes amidations at positions B, D, E, and G on adenosylcobyrinic A,C-diamide. NH(2) groups are provided by glutamine, and one molecule of ATP is hydrogenolyzed for each amidation. This Bacteroides fragilis (strain ATCC 25285 / DSM 2151 / CCUG 4856 / JCM 11019 / LMG 10263 / NCTC 9343 / Onslow / VPI 2553 / EN-2) protein is Cobyric acid synthase.